Here is a 137-residue protein sequence, read N- to C-terminus: Putative pre-16S rRNA nuclease (137 aa).

The protein belongs to the YqgF nuclease family.

The protein localises to the cytoplasm. Functionally, could be a nuclease involved in processing of the 5'-end of pre-16S rRNA. This is Putative pre-16S rRNA nuclease from Clostridium botulinum (strain Eklund 17B / Type B).